Reading from the N-terminus, the 481-residue chain is Proline--tRNA ligase (481 aa).

The protein belongs to the class-II aminoacyl-tRNA synthetase family. ProS type 3 subfamily. In terms of assembly, homodimer.

The protein resides in the cytoplasm. The catalysed reaction is tRNA(Pro) + L-proline + ATP = L-prolyl-tRNA(Pro) + AMP + diphosphate. Its function is as follows. Catalyzes the attachment of proline to tRNA(Pro) in a two-step reaction: proline is first activated by ATP to form Pro-AMP and then transferred to the acceptor end of tRNA(Pro). This chain is Proline--tRNA ligase, found in Saccharolobus islandicus (strain Y.N.15.51 / Yellowstone #2) (Sulfolobus islandicus).